The following is a 338-amino-acid chain: 1-aminocyclopropane-1-carboxylate deaminase (338 aa).

Lysine 51 carries the post-translational modification N6-(pyridoxal phosphate)lysine. Serine 78 acts as the Nucleophile in catalysis.

Belongs to the ACC deaminase/D-cysteine desulfhydrase family. As to quaternary structure, homotrimer. Pyridoxal 5'-phosphate serves as cofactor.

It catalyses the reaction 1-aminocyclopropane-1-carboxylate + H2O = 2-oxobutanoate + NH4(+). Catalyzes a cyclopropane ring-opening reaction, the irreversible conversion of 1-aminocyclopropane-1-carboxylate (ACC) to ammonia and alpha-ketobutyrate. Allows growth on ACC as a nitrogen source. The sequence is that of 1-aminocyclopropane-1-carboxylate deaminase from Burkholderia multivorans (strain ATCC 17616 / 249).